A 155-amino-acid polypeptide reads, in one-letter code: MRHLPYFCRGQVVRGFGRGSKQLGIPTANFPEQVVDNLPADISTGIYYGWASVGSGDVHKMVVSIGWNPYYKNTKKSMETHIMHTFKEDFYGEILNVAIVGYLRPEKNFDSLESLISAIQGDIEEAKKRLELPEHLKIKEDNFFQVSKSKIMNGH.

Gly-15, Lys-21, Thr-27, and Asn-29 together coordinate ATP. Mg(2+) is bound by residues Thr-27 and Asn-29. Glu-79 (nucleophile) is an active-site residue. Residues Ile-82, His-84, and Tyr-91 each coordinate ATP. Residues Arg-104, Lys-107, and Phe-109 each contribute to the FMN site.

Monomer. Directly interacts with TNFRSF1A death domain. TNFRSF1A-binding may be supported by TRADD. In the absence of TNFRSF1A, interacts with TRADD. Independently of TNFRSF1A, interacts with the NADPH oxidase subunit CYBA. Zn(2+) serves as cofactor. Requires Mg(2+) as cofactor. In terms of tissue distribution, detected in brain, placenta and urinary bladder.

The protein resides in the cytoplasm. The enzyme catalyses riboflavin + ATP = FMN + ADP + H(+). Its pathway is cofactor biosynthesis; FMN biosynthesis; FMN from riboflavin (ATP route): step 1/1. Catalyzes the phosphorylation of riboflavin (vitamin B2) to form flavin-mononucleotide (FMN), hence rate-limiting enzyme in the synthesis of FAD. Essential for TNF-induced reactive oxygen species (ROS) production. Through its interaction with both TNFRSF1A and CYBA, physically and functionally couples TNFRSF1A to NADPH oxidase. TNF-activation of RFK may enhance the incorporation of FAD in NADPH oxidase, a critical step for the assembly and activation of NADPH oxidase. This chain is Riboflavin kinase (RFK), found in Homo sapiens (Human).